The following is a 298-amino-acid chain: GTPase Era (298 aa).

The 168-residue stretch at 4–171 (KSGFVSVIGR…LKEALDYIPE (168 aa)) folds into the Era-type G domain. The G1 stretch occupies residues 12–19 (GRPNVGKS). Position 12–19 (12–19 (GRPNVGKS)) interacts with GTP. Residues 38-42 (QTTRN) form a G2 region. Positions 59–62 (DTPG) are G3. Residues 59-63 (DTPGI) and 121-124 (NKVD) contribute to the GTP site. The G4 stretch occupies residues 121-124 (NKVD). Residues 150-152 (ISA) form a G5 region. One can recognise a KH type-2 domain in the interval 202 to 279 (LDDEVPHGVG…FLELWVKVKP (78 aa)).

Belongs to the TRAFAC class TrmE-Era-EngA-EngB-Septin-like GTPase superfamily. Era GTPase family. In terms of assembly, monomer.

The protein localises to the cytoplasm. The protein resides in the cell membrane. Its function is as follows. An essential GTPase that binds both GDP and GTP, with rapid nucleotide exchange. Plays a role in 16S rRNA processing and 30S ribosomal subunit biogenesis and possibly also in cell cycle regulation and energy metabolism. The polypeptide is GTPase Era (Ruminiclostridium cellulolyticum (strain ATCC 35319 / DSM 5812 / JCM 6584 / H10) (Clostridium cellulolyticum)).